Consider the following 252-residue polypeptide: 5'-nucleotidase SurE (252 aa).

A divalent metal cation-binding residues include Asp-8, Asp-9, Ser-39, and Asn-91.

The protein belongs to the SurE nucleotidase family. Requires a divalent metal cation as cofactor.

Its subcellular location is the cytoplasm. The catalysed reaction is a ribonucleoside 5'-phosphate + H2O = a ribonucleoside + phosphate. Its function is as follows. Nucleotidase that shows phosphatase activity on nucleoside 5'-monophosphates. This Bordetella bronchiseptica (strain ATCC BAA-588 / NCTC 13252 / RB50) (Alcaligenes bronchisepticus) protein is 5'-nucleotidase SurE.